Consider the following 84-residue polypeptide: ATPase-stabilizing factor 15 kDa protein (84 aa).

Over residues 1-18 (MTRTNKWTEREGKADPKY) the composition is skewed to basic and acidic residues. The tract at residues 1–84 (MTRTNKWTER…EQKFENVQKE (84 aa)) is disordered. Residues S28 and S69 each carry the phosphoserine modification. The segment covering 74 to 84 (HEQKFENVQKE) has biased composition (basic and acidic residues).

It belongs to the STF2 family.

It is found in the mitochondrion. The protein localises to the cytoplasm. Found to stabilize, together with STF1, a complex of intrinsic ATPase inhibitor INH1 and proton-translocating ATPase (F(1)F(0)-ATPase) in mitochondrial membranes. Binds to the F0 part and may function to hold the ATPase inhibitor or STF1 on the F1 subunit. Also acts as a hydrophilins that enhances dry stress tolerance. Cell viability after desiccation and rehydration is due to the antioxidant capacity of the protein, which reduces the number of apoptotic cells during stress conditions by minimising the accumulation of reactive oxygen species (ROS) in the cells. The chain is ATPase-stabilizing factor 15 kDa protein (STF2) from Saccharomyces cerevisiae (strain ATCC 204508 / S288c) (Baker's yeast).